The chain runs to 274 residues: Centriolar and ciliogenesis-associated protein hyls-1 (274 aa).

Disordered stretches follow at residues 156–188 (RSSV…SSRP) and 255–274 (NNED…PYID). Positions 171-183 (VGLSTETEQSELQ) are enriched in polar residues. Basic and acidic residues predominate over residues 257–274 (EDWKANHDKDWSPRPYID).

The protein belongs to the HYLS1 family. Interacts with sas-4; leading to its localization into newly forming centrioles.

The protein localises to the cytoplasm. Its subcellular location is the cytoskeleton. It localises to the microtubule organizing center. It is found in the centrosome. The protein resides in the centriole. The protein localises to the cell projection. Its subcellular location is the cilium. Its function is as follows. Plays an important role in ciliogenesis. This chain is Centriolar and ciliogenesis-associated protein hyls-1, found in Caenorhabditis elegans.